The sequence spans 357 residues: Vomeronasal type-1 receptor 5 (357 aa).

Residues 1–3 (MLK) lie on the Extracellular side of the membrane. The helical transmembrane segment at 4 to 24 (LVIIENMAEIMLFSLDLLLFS) threads the bilayer. Over 25-52 (TDILCFNFPSKMIKLPGFITIQIFFYPQ) the chain is Cytoplasmic. The helical transmembrane segment at 53–73 (ASFGISANTILLLFHIFTFVF) threads the bilayer. Over 74–81 (SHRSKSID) the chain is Extracellular. A helical transmembrane segment spans residues 82-102 (MIISHLSLIHILLLFTQAILV). Residues 103 to 130 (SLDFFGSQNTQDDLRYKVIVFLNKVMRG) are Cytoplasmic-facing. Residues 131–151 (LSICTPCLLSVLQAIISPSIF) form a helical membrane-spanning segment. At 152–163 (SLAKLKHPSASH) the chain is on the extracellular side. Residues 164–184 (ILGFFLFSWVLNMFIGVIFCC) traverse the membrane as a helical segment. Residues 185-269 (TLRLPPVKRG…RVSPVKRASQ (85 aa)) are Cytoplasmic-facing. A helical membrane pass occupies residues 270 to 290 (AILLLVSFVFTYWVDFTFSFS). The Extracellular portion of the chain corresponds to 291 to 300 (GGVTWINDSL). N297 carries N-linked (GlcNAc...) asparagine glycosylation. A helical membrane pass occupies residues 301–321 (LVWLQVIVANSYAAISPLMLI). Residues 322–357 (YADNQIFKTLQMLWFKYLSPPKLMLKFNRQCGSTKK) are Cytoplasmic-facing.

It belongs to the G-protein coupled receptor 1 family.

It is found in the cell membrane. Functionally, putative pheromone receptor. This Homo sapiens (Human) protein is Vomeronasal type-1 receptor 5 (VN1R5).